A 484-amino-acid chain; its full sequence is ATP synthase subunit beta (484 aa).

Position 156 to 163 (156 to 163) interacts with ATP; it reads GGAGVGKT.

Belongs to the ATPase alpha/beta chains family. As to quaternary structure, F-type ATPases have 2 components, CF(1) - the catalytic core - and CF(0) - the membrane proton channel. CF(1) has five subunits: alpha(3), beta(3), gamma(1), delta(1), epsilon(1). CF(0) has three main subunits: a(1), b(2) and c(9-12). The alpha and beta chains form an alternating ring which encloses part of the gamma chain. CF(1) is attached to CF(0) by a central stalk formed by the gamma and epsilon chains, while a peripheral stalk is formed by the delta and b chains.

The protein resides in the cell inner membrane. It catalyses the reaction ATP + H2O + 4 H(+)(in) = ADP + phosphate + 5 H(+)(out). In terms of biological role, produces ATP from ADP in the presence of a proton gradient across the membrane. The catalytic sites are hosted primarily by the beta subunits. The polypeptide is ATP synthase subunit beta (Rhizorhabdus wittichii (strain DSM 6014 / CCUG 31198 / JCM 15750 / NBRC 105917 / EY 4224 / RW1) (Sphingomonas wittichii)).